Reading from the N-terminus, the 492-residue chain is Mitochondrial distribution and morphology protein 12 (492 aa).

The SMP-LTD domain maps to Met-1 to Val-492. Disordered regions lie at residues Asp-68–Gly-158, Leu-199–Arg-301, and Ala-379–Asn-434. A compositionally biased stretch (acidic residues) spans Val-78 to Val-90. The segment covering Ser-130–Met-139 has biased composition (gly residues). Low complexity predominate over residues Leu-246–Ser-257. Residues Thr-270 to Glu-285 show a composition bias toward polar residues. The span at Gly-387 to Gly-400 shows a compositional bias: low complexity. A compositionally biased stretch (gly residues) spans Gln-401–Pro-415. Residues Gly-416–Gly-428 are compositionally biased toward low complexity.

The protein belongs to the MDM12 family. Component of the ER-mitochondria encounter structure (ERMES) or MDM complex, composed of MMM1, MDM10, MDM12 and MDM34. An MMM1 homodimer associates with one molecule of MDM12 on each side in a pairwise head-to-tail manner, and the SMP-LTD domains of MMM1 and MDM12 generate a continuous hydrophobic tunnel for phospholipid trafficking.

It localises to the mitochondrion outer membrane. It is found in the endoplasmic reticulum membrane. Component of the ERMES/MDM complex, which serves as a molecular tether to connect the endoplasmic reticulum (ER) and mitochondria. Components of this complex are involved in the control of mitochondrial shape and protein biogenesis, and function in nonvesicular lipid trafficking between the ER and mitochondria. MDM12 is required for the interaction of the ER-resident membrane protein MMM1 and the outer mitochondrial membrane-resident beta-barrel protein MDM10. The MDM12-MMM1 subcomplex functions in the major beta-barrel assembly pathway that is responsible for biogenesis of all mitochondrial outer membrane beta-barrel proteins, and acts in a late step after the SAM complex. The MDM10-MDM12-MMM1 subcomplex further acts in the TOM40-specific pathway after the action of the MDM12-MMM1 complex. Essential for establishing and maintaining the structure of mitochondria and maintenance of mtDNA nucleoids. The protein is Mitochondrial distribution and morphology protein 12 of Chaetomium globosum (strain ATCC 6205 / CBS 148.51 / DSM 1962 / NBRC 6347 / NRRL 1970) (Soil fungus).